The following is a 147-amino-acid chain: Large ribosomal subunit protein bL21 (147 aa).

The disordered stretch occupies residues 115 to 147; that stretch reads KSIKVGKPTPKSSSKKEETVKKETKPKSEKSTN. A compositionally biased stretch (basic and acidic residues) spans 128–147; the sequence is SKKEETVKKETKPKSEKSTN.

It belongs to the bacterial ribosomal protein bL21 family. In terms of assembly, part of the 50S ribosomal subunit. Contacts protein L20.

Its function is as follows. This protein binds to 23S rRNA in the presence of protein L20. The protein is Large ribosomal subunit protein bL21 of Prochlorococcus marinus (strain MIT 9215).